The following is a 743-amino-acid chain: FHF complex subunit HOOK-interacting protein 2B (743 aa).

The segment at 186–219 is disordered; sequence CGEPTALPKDTTSHGDKDCSHDGAPARPQLDGES. Residues 196–206 show a composition bias toward basic and acidic residues; sequence TTSHGDKDCSH.

Belongs to the FHIP family. In terms of tissue distribution, expressed in liver.

In terms of biological role, able to activate MAPK/ERK and TGFB signaling pathways. May regulate the activity of genes involved in intestinal barrier function and immunoprotective inflammation. May play a role in cell proliferation. The chain is FHF complex subunit HOOK-interacting protein 2B from Homo sapiens (Human).